Consider the following 243-residue polypeptide: Probable HTH-type transcriptional regulator GfsR (243 aa).

Positions 154–179 (AAVARPDTSGSATGRTGDSSPSLALS) are disordered. The span at 161 to 178 (TSGSATGRTGDSSPSLAL) shows a compositional bias: polar residues. Residues 171–236 (DSSPSLALSP…QALLRWLGHP (66 aa)) form the HTH luxR-type domain. Residues 195-214 (VREIAVEMRLAEKTVRNYLS) constitute a DNA-binding region (H-T-H motif).

Its pathway is antibiotic biosynthesis. In terms of biological role, probable DNA-binding protein that contributes to the control of expression of the biosynthesis operon of the 16-membered macrolide antibiotics FD-891 and FD-892. Might be a member of a two-component regulatory system; the putative sensor kinase gene is unknown. In Streptomyces halstedii, this protein is Probable HTH-type transcriptional regulator GfsR.